A 72-amino-acid polypeptide reads, in one-letter code: Translation initiation factor IF-1 (72 aa).

An S1-like domain is found at 1-72 (MAKDDVIQMQ…SRARIVFRAK (72 aa)).

This sequence belongs to the IF-1 family. Component of the 30S ribosomal translation pre-initiation complex which assembles on the 30S ribosome in the order IF-2 and IF-3, IF-1 and N-formylmethionyl-tRNA(fMet); mRNA recruitment can occur at any time during PIC assembly.

The protein resides in the cytoplasm. Its function is as follows. One of the essential components for the initiation of protein synthesis. Stabilizes the binding of IF-2 and IF-3 on the 30S subunit to which N-formylmethionyl-tRNA(fMet) subsequently binds. Helps modulate mRNA selection, yielding the 30S pre-initiation complex (PIC). Upon addition of the 50S ribosomal subunit IF-1, IF-2 and IF-3 are released leaving the mature 70S translation initiation complex. The sequence is that of Translation initiation factor IF-1 from Burkholderia mallei (strain NCTC 10247).